The chain runs to 251 residues: MLAKRIIPCLDVRDGRVVKGINFEGLRDAGSILEQARFYNNELADELVFLDISASLESRKTTLEEVLKVSGEIFIPLTVGGGINSVERAREVFLHGADKVSVNTAAVNDPFLITRIAERYGSQAVVVAIDIKKTGEDYLVFTHSGKKPTCYEALEWAHKVQELGAGEILLTSMDRDGTKEGYDNDILAKISTSVHIPVIASGGAGNLEHLYDGFTKGHADAALAASIFHFRQHSIREAKEYLRQRGITVRI.

Residues D11 and D130 contribute to the active site.

This sequence belongs to the HisA/HisF family. As to quaternary structure, heterodimer of HisH and HisF.

The protein resides in the cytoplasm. It carries out the reaction 5-[(5-phospho-1-deoxy-D-ribulos-1-ylimino)methylamino]-1-(5-phospho-beta-D-ribosyl)imidazole-4-carboxamide + L-glutamine = D-erythro-1-(imidazol-4-yl)glycerol 3-phosphate + 5-amino-1-(5-phospho-beta-D-ribosyl)imidazole-4-carboxamide + L-glutamate + H(+). It functions in the pathway amino-acid biosynthesis; L-histidine biosynthesis; L-histidine from 5-phospho-alpha-D-ribose 1-diphosphate: step 5/9. Its function is as follows. IGPS catalyzes the conversion of PRFAR and glutamine to IGP, AICAR and glutamate. The HisF subunit catalyzes the cyclization activity that produces IGP and AICAR from PRFAR using the ammonia provided by the HisH subunit. The chain is Imidazole glycerol phosphate synthase subunit HisF from Pelodictyon phaeoclathratiforme (strain DSM 5477 / BU-1).